Here is a 124-residue protein sequence, read N- to C-terminus: Small ribosomal subunit protein uS12 (124 aa).

The segment at 1 to 32 is disordered; the sequence is MPTIQQLVRKGRKDKATKTKTPALKGSPQRRG. Asp-89 carries the post-translational modification 3-methylthioaspartic acid. A disordered region spans residues 105–124; it reads QGVRGRQQARSRYGAKKEKK. A compositionally biased stretch (basic residues) spans 111–124; that stretch reads QQARSRYGAKKEKK.

This sequence belongs to the universal ribosomal protein uS12 family. Part of the 30S ribosomal subunit. Contacts proteins S8 and S17. May interact with IF1 in the 30S initiation complex.

Functionally, with S4 and S5 plays an important role in translational accuracy. In terms of biological role, interacts with and stabilizes bases of the 16S rRNA that are involved in tRNA selection in the A site and with the mRNA backbone. Located at the interface of the 30S and 50S subunits, it traverses the body of the 30S subunit contacting proteins on the other side and probably holding the rRNA structure together. The combined cluster of proteins S8, S12 and S17 appears to hold together the shoulder and platform of the 30S subunit. This chain is Small ribosomal subunit protein uS12, found in Beutenbergia cavernae (strain ATCC BAA-8 / DSM 12333 / CCUG 43141 / JCM 11478 / NBRC 16432 / NCIMB 13614 / HKI 0122).